Consider the following 511-residue polypeptide: Glucans biosynthesis protein G (511 aa).

The signal sequence occupies residues 1 to 22; sequence MMKMRWLGAAIMLTLYASSSWA.

It belongs to the OpgD/OpgG family.

It is found in the periplasm. It functions in the pathway glycan metabolism; osmoregulated periplasmic glucan (OPG) biosynthesis. In terms of biological role, involved in the biosynthesis of osmoregulated periplasmic glucans (OPGs). The sequence is that of Glucans biosynthesis protein G from Salmonella paratyphi A (strain ATCC 9150 / SARB42).